We begin with the raw amino-acid sequence, 376 residues long: Rhodopsin (376 aa).

Topologically, residues 1-52 (MSSWSNQPAMDDYGLPSSNPYGNFTVVDMAPKDILHMIHPHWYQYPPMNPMM) are extracellular. Asparagine 23 carries N-linked (GlcNAc...) asparagine glycosylation. A helical transmembrane segment spans residues 53–77 (YPLLLIFMLFTGILCLAGNFVTIWV). Residues 78–89 (FMNTKSLRTPAN) lie on the Cytoplasmic side of the membrane. Residues 90 to 112 (LLVVNLAMSDFLMMFTMFPPMMV) form a helical membrane-spanning segment. The Extracellular segment spans residues 113-126 (TCYYHTWTLGPTFC). Cysteines 126 and 203 form a disulfide. The helical transmembrane segment at 127-149 (QVYAFLGNLCGCASIWTMVFITF) threads the bilayer. A 'Ionic lock' involved in activated form stabilization motif is present at residues 150 to 152 (DRY). The Cytoplasmic portion of the chain corresponds to 150 to 168 (DRYNVIVKGVAGEPLSTKK). A helical transmembrane segment spans residues 169-189 (ASLWILTIWVLSITWCIAPFF). Residues 190–216 (GWNRYVPEGNLTGCGTDYLSEDILSRS) are Extracellular-facing. N-linked (GlcNAc...) asparagine glycosylation is present at asparagine 199. The helical transmembrane segment at 217-237 (YLYDYSTWVYYLPLLPIYCYV) threads the bilayer. Residues 238–278 (SIIKAVAAHEKGMRDQAKKMGIKSLRNEEAQKTSAECRLAK) are Cytoplasmic-facing. A helical transmembrane segment spans residues 279–300 (IAMTTVALWFIAWTPYLLINWV). At 301-311 (GMFARSYLSPV) the chain is on the extracellular side. A helical membrane pass occupies residues 312 to 333 (YTIWGYVFAKANAVYNPIVYAI). Residue lysine 321 is modified to N6-(retinylidene)lysine. Residues 334 to 376 (SHPKYRAAMEKKLPCLSCKTESDDVSESASTTTSSAEEKAESA) are Cytoplasmic-facing. The tract at residues 353–376 (TESDDVSESASTTTSSAEEKAESA) is disordered.

Belongs to the G-protein coupled receptor 1 family. Opsin subfamily. As to quaternary structure, homodimer. Interacts with GNAQ. Contains one covalently linked retinal chromophore. As to expression, detected on rhabdomere membranes on photoreceptor cells in the retina (at protein level).

The protein resides in the cell projection. Its subcellular location is the rhabdomere membrane. Its function is as follows. Photoreceptor required for image-forming vision at low light intensity. Can use both retinal and 3-dehydroretinal as visual pigment. Light-induced isomerization of 11-cis to all-trans retinal triggers a conformational change that activates signaling via G-proteins. Signaling via GNAQ probably mediates the activation of phospholipase C. This is Rhodopsin (RHO) from Procambarus clarkii (Red swamp crayfish).